A 390-amino-acid polypeptide reads, in one-letter code: Cell adhesion molecule 4 (390 aa).

The first 27 residues, M1–S27, serve as a signal peptide directing secretion. An Ig-like V-type domain is found at Q28–T122. The Extracellular segment spans residues Q28–A326. N34 and N70 each carry an N-linked (GlcNAc...) asparagine glycan. 3 disulfides stabilise this stretch: C47–C107, C148–C202, and C247–C293. Ig-like C2-type domains follow at residues P127 to E219 and P226 to V309. Residues N264 and N288 are each glycosylated (N-linked (GlcNAc...) asparagine). Residues V327–V347 traverse the membrane as a helical segment. The Cytoplasmic portion of the chain corresponds to W348–I390.

The protein belongs to the nectin family.

The protein resides in the membrane. In terms of biological role, involved in the cell-cell adhesion. This Xenopus laevis (African clawed frog) protein is Cell adhesion molecule 4 (cadm4).